The following is a 491-amino-acid chain: Putative pentatricopeptide repeat-containing protein At1g02420 (491 aa).

PPR repeat units lie at residues 179–209, 210–244, 245–279, 280–314, 315–349, 350–384, 385–419, and 420–454; these read DTACFNALLRTLCQEKSMTDARNVYHSLKHQ, FQPDLQTFNILLSGWKSSEEAEAFFEEMKGKGLKP, DVVTYNSLIDVYCKDREIEKAYKLIDKMREEEETP, DVITYTTVIGGLGLIGQPDKAREVLKEMKEYGCYP, DVAAYNAAIRNFCIARRLGDADKLVDEMVKKGLSP, NATTYNLFFRVLSLANDLGRSWELYVRMLGNECLP, NTQSCMFLIKMFKRHEKVDMAMRLWEDMVVKGFGS, and YSLVSDVLLDLLCDLAKVEEAEKCLLEMVEKGHRP.

It belongs to the PPR family. P subfamily.

The chain is Putative pentatricopeptide repeat-containing protein At1g02420 from Arabidopsis thaliana (Mouse-ear cress).